A 200-amino-acid polypeptide reads, in one-letter code: 3-isopropylmalate dehydratase small subunit (200 aa).

The protein belongs to the LeuD family. LeuD type 1 subfamily. Heterodimer of LeuC and LeuD.

The catalysed reaction is (2R,3S)-3-isopropylmalate = (2S)-2-isopropylmalate. Its pathway is amino-acid biosynthesis; L-leucine biosynthesis; L-leucine from 3-methyl-2-oxobutanoate: step 2/4. Catalyzes the isomerization between 2-isopropylmalate and 3-isopropylmalate, via the formation of 2-isopropylmaleate. The polypeptide is 3-isopropylmalate dehydratase small subunit (Yersinia pseudotuberculosis serotype O:1b (strain IP 31758)).